We begin with the raw amino-acid sequence, 282 residues long: ATP synthase gamma chain (282 aa).

It belongs to the ATPase gamma chain family. F-type ATPases have 2 components, CF(1) - the catalytic core - and CF(0) - the membrane proton channel. CF(1) has five subunits: alpha(3), beta(3), gamma(1), delta(1), epsilon(1). CF(0) has three main subunits: a, b and c.

Its subcellular location is the cell membrane. Functionally, produces ATP from ADP in the presence of a proton gradient across the membrane. The gamma chain is believed to be important in regulating ATPase activity and the flow of protons through the CF(0) complex. The chain is ATP synthase gamma chain from Clostridium botulinum (strain Okra / Type B1).